A 324-amino-acid chain; its full sequence is Aspartate carbamoyltransferase catalytic subunit (324 aa).

Arginine 55 and threonine 56 together coordinate carbamoyl phosphate. Lysine 83 is a binding site for L-aspartate. 3 residues coordinate carbamoyl phosphate: arginine 105, histidine 135, and glutamine 138. L-aspartate is bound by residues arginine 173 and arginine 227. Positions 268 and 269 each coordinate carbamoyl phosphate.

Belongs to the aspartate/ornithine carbamoyltransferase superfamily. ATCase family. Heterododecamer (2C3:3R2) of six catalytic PyrB chains organized as two trimers (C3), and six regulatory PyrI chains organized as three dimers (R2).

The catalysed reaction is carbamoyl phosphate + L-aspartate = N-carbamoyl-L-aspartate + phosphate + H(+). Its pathway is pyrimidine metabolism; UMP biosynthesis via de novo pathway; (S)-dihydroorotate from bicarbonate: step 2/3. Its function is as follows. Catalyzes the condensation of carbamoyl phosphate and aspartate to form carbamoyl aspartate and inorganic phosphate, the committed step in the de novo pyrimidine nucleotide biosynthesis pathway. This Nocardioides sp. (strain ATCC BAA-499 / JS614) protein is Aspartate carbamoyltransferase catalytic subunit.